Here is an 842-residue protein sequence, read N- to C-terminus: Protein P (842 aa).

The tract at residues 1–177 (MPLSYQHFRK…FCGSPYSWEQ (177 aa)) is terminal protein domain (TP). A spacer region spans residues 178–346 (ELQHGRLVFQ…YCLTHIVNLL (169 aa)). The tract at residues 218-274 (LKQSRLGLQPQQGSLARGKSGRSGSIRARVPPTTRRSFGVEPSGSGHIDNRASSTSS) is disordered. Residues 347 to 690 (EDWGPCTEHG…YLHLYPVARR (344 aa)) are polymerase/reverse transcriptase domain (RT). The Reverse transcriptase domain occupies 357 to 600 (EHNIRIPRTP…YSLNFMGYVI (244 aa)). Aspartate 429, aspartate 551, and aspartate 552 together coordinate Mg(2+).

The protein belongs to the hepadnaviridae P protein family.

It carries out the reaction DNA(n) + a 2'-deoxyribonucleoside 5'-triphosphate = DNA(n+1) + diphosphate. It catalyses the reaction Endonucleolytic cleavage to 5'-phosphomonoester.. Activated by host HSP70 and HSP40 in vitro to be able to bind the epsilon loop of the pgRNA. Because deletion of the RNase H region renders the protein partly chaperone-independent, the chaperones may be needed indirectly to relieve occlusion of the RNA-binding site by this domain. Inhibited by several reverse-transcriptase inhibitors: Lamivudine, Adefovir and Entecavir. In terms of biological role, multifunctional enzyme that converts the viral RNA genome into dsDNA in viral cytoplasmic capsids. This enzyme displays a DNA polymerase activity that can copy either DNA or RNA templates, and a ribonuclease H (RNase H) activity that cleaves the RNA strand of RNA-DNA heteroduplexes in a partially processive 3'- to 5'-endonucleasic mode. Neo-synthesized pregenomic RNA (pgRNA) are encapsidated together with the P protein, and reverse-transcribed inside the nucleocapsid. Initiation of reverse-transcription occurs first by binding the epsilon loop on the pgRNA genome, and is initiated by protein priming, thereby the 5'-end of (-)DNA is covalently linked to P protein. Partial (+)DNA is synthesized from the (-)DNA template and generates the relaxed circular DNA (RC-DNA) genome. After budding and infection, the RC-DNA migrates in the nucleus, and is converted into a plasmid-like covalently closed circular DNA (cccDNA). The activity of P protein does not seem to be necessary for cccDNA generation, and is presumably released from (+)DNA by host nuclear DNA repair machinery. The sequence is that of Protein P from Hepatitis B virus genotype C subtype adr (isolate Korea/Kim/1989) (HBV-C).